A 486-amino-acid polypeptide reads, in one-letter code: Probable glycine dehydrogenase (decarboxylating) subunit 2 (486 aa).

Lys269 is modified (N6-(pyridoxal phosphate)lysine).

Belongs to the GcvP family. C-terminal subunit subfamily. In terms of assembly, the glycine cleavage system is composed of four proteins: P, T, L and H. In this organism, the P 'protein' is a heterodimer of two subunits. Pyridoxal 5'-phosphate serves as cofactor.

It carries out the reaction N(6)-[(R)-lipoyl]-L-lysyl-[glycine-cleavage complex H protein] + glycine + H(+) = N(6)-[(R)-S(8)-aminomethyldihydrolipoyl]-L-lysyl-[glycine-cleavage complex H protein] + CO2. In terms of biological role, the glycine cleavage system catalyzes the degradation of glycine. The P protein binds the alpha-amino group of glycine through its pyridoxal phosphate cofactor; CO(2) is released and the remaining methylamine moiety is then transferred to the lipoamide cofactor of the H protein. This Chlorobaculum tepidum (strain ATCC 49652 / DSM 12025 / NBRC 103806 / TLS) (Chlorobium tepidum) protein is Probable glycine dehydrogenase (decarboxylating) subunit 2.